The primary structure comprises 105 residues: UPF0148 protein PH0795 (105 aa).

Belongs to the UPF0148 family.

This Pyrococcus horikoshii (strain ATCC 700860 / DSM 12428 / JCM 9974 / NBRC 100139 / OT-3) protein is UPF0148 protein PH0795.